The primary structure comprises 360 residues: Chorismate synthase (360 aa).

Positions 48 and 54 each coordinate NADP(+). FMN contacts are provided by residues 125–127 (RSS), 246–247 (NA), glycine 286, 301–305 (KPTSS), and arginine 327.

The protein belongs to the chorismate synthase family. As to quaternary structure, homotetramer. FMNH2 serves as cofactor.

The enzyme catalyses 5-O-(1-carboxyvinyl)-3-phosphoshikimate = chorismate + phosphate. Its pathway is metabolic intermediate biosynthesis; chorismate biosynthesis; chorismate from D-erythrose 4-phosphate and phosphoenolpyruvate: step 7/7. Functionally, catalyzes the anti-1,4-elimination of the C-3 phosphate and the C-6 proR hydrogen from 5-enolpyruvylshikimate-3-phosphate (EPSP) to yield chorismate, which is the branch point compound that serves as the starting substrate for the three terminal pathways of aromatic amino acid biosynthesis. This reaction introduces a second double bond into the aromatic ring system. The protein is Chorismate synthase of Actinobacillus pleuropneumoniae serotype 7 (strain AP76).